A 417-amino-acid polypeptide reads, in one-letter code: 4-hydroxy-3-methylbut-2-enyl diphosphate reductase (417 aa).

A [4Fe-4S] cluster-binding site is contributed by C56. Residue H86 participates in (2E)-4-hydroxy-3-methylbut-2-enyl diphosphate binding. A dimethylallyl diphosphate-binding site is contributed by H86. H86 contacts isopentenyl diphosphate. C151 lines the [4Fe-4S] cluster pocket. H179 is a (2E)-4-hydroxy-3-methylbut-2-enyl diphosphate binding site. Residue H179 participates in dimethylallyl diphosphate binding. An isopentenyl diphosphate-binding site is contributed by H179. The Proton donor role is filled by E181. T244 lines the (2E)-4-hydroxy-3-methylbut-2-enyl diphosphate pocket. Position 282 (C282) interacts with [4Fe-4S] cluster. 4 residues coordinate (2E)-4-hydroxy-3-methylbut-2-enyl diphosphate: S311, S312, N313, and S374. The dimethylallyl diphosphate site is built by S311, S312, N313, and S374. S311, S312, N313, and S374 together coordinate isopentenyl diphosphate.

This sequence belongs to the IspH family. Requires [4Fe-4S] cluster as cofactor.

It carries out the reaction isopentenyl diphosphate + 2 oxidized [2Fe-2S]-[ferredoxin] + H2O = (2E)-4-hydroxy-3-methylbut-2-enyl diphosphate + 2 reduced [2Fe-2S]-[ferredoxin] + 2 H(+). The catalysed reaction is dimethylallyl diphosphate + 2 oxidized [2Fe-2S]-[ferredoxin] + H2O = (2E)-4-hydroxy-3-methylbut-2-enyl diphosphate + 2 reduced [2Fe-2S]-[ferredoxin] + 2 H(+). The protein operates within isoprenoid biosynthesis; dimethylallyl diphosphate biosynthesis; dimethylallyl diphosphate from (2E)-4-hydroxy-3-methylbutenyl diphosphate: step 1/1. It participates in isoprenoid biosynthesis; isopentenyl diphosphate biosynthesis via DXP pathway; isopentenyl diphosphate from 1-deoxy-D-xylulose 5-phosphate: step 6/6. In terms of biological role, catalyzes the conversion of 1-hydroxy-2-methyl-2-(E)-butenyl 4-diphosphate (HMBPP) into a mixture of isopentenyl diphosphate (IPP) and dimethylallyl diphosphate (DMAPP). Acts in the terminal step of the DOXP/MEP pathway for isoprenoid precursor biosynthesis. This Gloeobacter violaceus (strain ATCC 29082 / PCC 7421) protein is 4-hydroxy-3-methylbut-2-enyl diphosphate reductase.